A 208-amino-acid polypeptide reads, in one-letter code: Thymidylate kinase (208 aa).

Residue 10–17 coordinates ATP; it reads GIDGSGKS.

Belongs to the thymidylate kinase family.

It carries out the reaction dTMP + ATP = dTDP + ADP. In terms of biological role, phosphorylation of dTMP to form dTDP in both de novo and salvage pathways of dTTP synthesis. The protein is Thymidylate kinase of Jannaschia sp. (strain CCS1).